The following is a 643-amino-acid chain: Phosphomethylpyrimidine synthase (643 aa).

Residues N248, M277, Y306, H342, 362-364 (SRG), 403-406 (DGLR), and E442 each bind substrate. Zn(2+) is bound at residue H446. Residue Y469 participates in substrate binding. A Zn(2+)-binding site is contributed by H510. Residues C590, C593, and C598 each contribute to the [4Fe-4S] cluster site.

It belongs to the ThiC family. In terms of assembly, homodimer. Requires [4Fe-4S] cluster as cofactor.

It carries out the reaction 5-amino-1-(5-phospho-beta-D-ribosyl)imidazole + S-adenosyl-L-methionine = 4-amino-2-methyl-5-(phosphooxymethyl)pyrimidine + CO + 5'-deoxyadenosine + formate + L-methionine + 3 H(+). It participates in cofactor biosynthesis; thiamine diphosphate biosynthesis. Its function is as follows. Catalyzes the synthesis of the hydroxymethylpyrimidine phosphate (HMP-P) moiety of thiamine from aminoimidazole ribotide (AIR) in a radical S-adenosyl-L-methionine (SAM)-dependent reaction. The sequence is that of Phosphomethylpyrimidine synthase from Burkholderia mallei (strain NCTC 10247).